We begin with the raw amino-acid sequence, 636 residues long: tRNA uridine 5-carboxymethylaminomethyl modification enzyme MnmG (636 aa).

FAD is bound at residue 18 to 23; it reads GAGHAG. 281–295 lines the NAD(+) pocket; it reads GPRYCPSIEDKIVRF.

It belongs to the MnmG family. As to quaternary structure, homodimer. Heterotetramer of two MnmE and two MnmG subunits. It depends on FAD as a cofactor.

The protein localises to the cytoplasm. Its function is as follows. NAD-binding protein involved in the addition of a carboxymethylaminomethyl (cmnm) group at the wobble position (U34) of certain tRNAs, forming tRNA-cmnm(5)s(2)U34. The protein is tRNA uridine 5-carboxymethylaminomethyl modification enzyme MnmG of Lactiplantibacillus plantarum (strain ATCC BAA-793 / NCIMB 8826 / WCFS1) (Lactobacillus plantarum).